The chain runs to 161 residues: Cell division control protein 31 (161 aa).

4 consecutive EF-hand domains span residues 20–55 (EQKQ…LGFE), 56–91 (LPKR…KILK), 93–128 (DPLD…LGET), and 129–161 (LTDE…CTDS). Ca(2+) contacts are provided by Asp33, Asn35, Asp37, and Glu44. Thr130 carries the post-translational modification Phosphothreonine. Residues Asp142, Asp144, Asp146, Glu148, and Glu153 each contribute to the Ca(2+) site.

It belongs to the centrin family. As to quaternary structure, component of the spindle pole body (SPB), acting as the connector of microtubule arrays in the cytoplasm and the nucleoplasm, is involved in nuclear positioning before chromosome segregation, SPB separation, spindle formation, chromosome segregation, nuclear migration into the bud, nuclear reorientation after cytokinesis and nuclear fusion during conjugation. The SPB half-bridge, which is tightly associated with the cytoplasmic side of the nuclear envelope and the SPB, is playing a key role as the starting structure for and in the initiation of SPB duplication in G1. At the SPB half-bridge CDC31 interacts with KAR1, MPS3 and SFI1. Interacts with KIC1. Interacts with VPS13. Associates with nuclear pore complexes (NPCs).

The protein localises to the nucleus envelope. The protein resides in the cytoplasm. It is found in the cytoskeleton. Its subcellular location is the microtubule organizing center. It localises to the spindle pole body. In terms of biological role, functions as a component of the spindle pole body (SPB) half-bridge. At the SPB, it is recruited by KAR1 and MPS3 to the SPB half-bridge and involved in the initial steps of SPB duplication. Also involved in connection with the protein kinase KIC1 in the maintenance of cell morphology and integrity. May play a role in vesicle-mediated transport, in a VPS13-dependent manner. In Saccharomyces cerevisiae (strain ATCC 204508 / S288c) (Baker's yeast), this protein is Cell division control protein 31 (CDC31).